Consider the following 509-residue polypeptide: Lysine--tRNA ligase (509 aa).

Residues E395 and E402 each coordinate Mg(2+).

It belongs to the class-II aminoacyl-tRNA synthetase family. In terms of assembly, homodimer. Mg(2+) is required as a cofactor.

It localises to the cytoplasm. The catalysed reaction is tRNA(Lys) + L-lysine + ATP = L-lysyl-tRNA(Lys) + AMP + diphosphate. This Fervidobacterium nodosum (strain ATCC 35602 / DSM 5306 / Rt17-B1) protein is Lysine--tRNA ligase.